Reading from the N-terminus, the 132-residue chain is Prefoldin subunit alpha (132 aa).

It belongs to the prefoldin subunit alpha family. As to quaternary structure, heterohexamer of two alpha and four beta subunits.

It localises to the cytoplasm. In terms of biological role, molecular chaperone capable of stabilizing a range of proteins. Seems to fulfill an ATP-independent, HSP70-like function in archaeal de novo protein folding. The protein is Prefoldin subunit alpha of Pyrobaculum islandicum (strain DSM 4184 / JCM 9189 / GEO3).